The chain runs to 404 residues: G-protein coupled receptor 143 (404 aa).

At 1–28 (MASPRLGTFCCPTRDAATQLVLSFQPRA) the chain is on the extracellular side. Residues 29-49 (FHALCLGSGGLRLALGLLQLL) traverse the membrane as a helical segment. Residues 50–78 (PGRRPAGPGSPATSPPASVRILRAAAACD) lie on the Cytoplasmic side of the membrane. The helical transmembrane segment at 79–99 (LLGCLGMVIRSTVWLGFPNFV) threads the bilayer. The Extracellular portion of the chain corresponds to 100–124 (DSVSDMNHTEIWPAAFCVGSAMWIQ). N-linked (GlcNAc...) asparagine glycosylation occurs at Asn-106. A helical membrane pass occupies residues 125–145 (LLYSACFWWLFCYAVDAYLVI). Residues 146 to 149 (RRSA) lie on the Cytoplasmic side of the membrane. Residues 150–170 (GLSTILLYHIMAWGLATLLCV) traverse the membrane as a helical segment. Residues 171–191 (EGAAMLYYPSVSRCERGLDHA) are Extracellular-facing. A helical membrane pass occupies residues 192–212 (IPHYVTMYLPLLLVLVANPIL). Over 213 to 248 (FQKTVTAVASLLKGRQGIYTENERRMGAVIKIRFFK) the chain is Cytoplasmic. The tract at residues 221-238 (ASLLKGRQGIYTENERRM) is necessary for its G protein-activation ability and normal distribution of melanosomes. Positions 222–231 (SLLKGRQGIY) match the lysosomal/melanosomal membrane localization signal motif. The helical transmembrane segment at 249–269 (IMLVLIICWLSNIINESLLFY) threads the bilayer. Topologically, residues 270 to 292 (LEMQTDINGGSLKPVRTAAKTTW) are extracellular. The helical transmembrane segment at 293-313 (FIMGILNPAQGFLLSLAFYGW) threads the bilayer. Residues 314 to 404 (TGCSLGFQSP…DPALPTHGDL (91 aa)) are Cytoplasmic-facing. Positions 329–330 (WE) match the lysosomal/melanosomal membrane localization signal motif. Residues 338–404 (EGAHPSPLMP…DPALPTHGDL (67 aa)) are disordered. A compositionally biased stretch (polar residues) spans 355-366 (KVSQVGGQTSDE).

It belongs to the G-protein coupled receptor OA family. As to quaternary structure, interacts with heterotrimeric G(i) proteins. Interacts with ARRB1 and ARRB2. Interacts with MLANA. Post-translationally, glycosylated. Phosphorylated. Expressed at high levels in the retina, including the retinal pigment epithelium (RPE), and in melanocytes. Weak expression is observed in brain and adrenal gland.

The protein resides in the melanosome membrane. It localises to the lysosome membrane. It is found in the apical cell membrane. Receptor for tyrosine, L-DOPA and dopamine. After binding to L-DOPA, stimulates Ca(2+) influx into the cytoplasm, increases secretion of the neurotrophic factor SERPINF1 and relocalizes beta arrestin at the plasma membrane; this ligand-dependent signaling occurs through a G(q)-mediated pathway in melanocytic cells. Its activity is mediated by G proteins which activate the phosphoinositide signaling pathway. Also plays a role as an intracellular G protein-coupled receptor involved in melanosome biogenesis, organization and transport. This Homo sapiens (Human) protein is G-protein coupled receptor 143 (GPR143).